The sequence spans 113 residues: Flagellar hook-basal body complex protein FliE (113 aa).

The protein belongs to the FliE family.

The protein resides in the bacterial flagellum basal body. The polypeptide is Flagellar hook-basal body complex protein FliE (Rhizobium etli (strain ATCC 51251 / DSM 11541 / JCM 21823 / NBRC 15573 / CFN 42)).